Here is a 315-residue protein sequence, read N- to C-terminus: L-lactate dehydrogenase (315 aa).

Positions 14, 35, and 66 each coordinate NAD(+). Substrate is bound by residues Q83, R89, and 121–124; that span reads NPVD. Residues 119–121 and S144 each bind NAD(+); that span reads VAN. A substrate-binding site is contributed by 149 to 152; sequence DTAR. The active-site Proton acceptor is the H176. The residue at position 221 (Y221) is a Phosphotyrosine. Position 230 (T230) interacts with substrate.

Belongs to the LDH/MDH superfamily. LDH family. As to quaternary structure, homotetramer.

It is found in the cytoplasm. It catalyses the reaction (S)-lactate + NAD(+) = pyruvate + NADH + H(+). It participates in fermentation; pyruvate fermentation to lactate; (S)-lactate from pyruvate: step 1/1. Its function is as follows. Catalyzes the conversion of lactate to pyruvate. The chain is L-lactate dehydrogenase from Mesomycoplasma hyopneumoniae (strain 7448) (Mycoplasma hyopneumoniae).